The primary structure comprises 129 residues: Ribonuclease P protein component (129 aa).

The protein belongs to the RnpA family. As to quaternary structure, consists of a catalytic RNA component (M1 or rnpB) and a protein subunit.

The enzyme catalyses Endonucleolytic cleavage of RNA, removing 5'-extranucleotides from tRNA precursor.. Its function is as follows. RNaseP catalyzes the removal of the 5'-leader sequence from pre-tRNA to produce the mature 5'-terminus. It can also cleave other RNA substrates such as 4.5S RNA. The protein component plays an auxiliary but essential role in vivo by binding to the 5'-leader sequence and broadening the substrate specificity of the ribozyme. This chain is Ribonuclease P protein component, found in Corynebacterium jeikeium (strain K411).